Here is a 458-residue protein sequence, read N- to C-terminus: Glycine--tRNA ligase (458 aa).

The substrate site is built by Arg-97 and Glu-171. ATP-binding positions include 203 to 205 (RNE), 213 to 218 (FRTREF), 287 to 288 (EL), and 331 to 334 (GADR). A substrate-binding site is contributed by 218-222 (FEQME). 327–331 (EPSLG) contacts substrate.

It belongs to the class-II aminoacyl-tRNA synthetase family. In terms of assembly, homodimer.

Its subcellular location is the cytoplasm. The enzyme catalyses tRNA(Gly) + glycine + ATP = glycyl-tRNA(Gly) + AMP + diphosphate. Functionally, catalyzes the attachment of glycine to tRNA(Gly). In Bacillus thuringiensis subsp. konkukian (strain 97-27), this protein is Glycine--tRNA ligase.